The primary structure comprises 860 residues: Alanine--tRNA ligase (860 aa).

Residues His-563, His-567, Cys-665, and His-669 each contribute to the Zn(2+) site. The segment at 824-843 is disordered; the sequence is VGGKGGGRPDMAQAGGTDSS.

This sequence belongs to the class-II aminoacyl-tRNA synthetase family. It depends on Zn(2+) as a cofactor.

The protein resides in the cytoplasm. It carries out the reaction tRNA(Ala) + L-alanine + ATP = L-alanyl-tRNA(Ala) + AMP + diphosphate. Catalyzes the attachment of alanine to tRNA(Ala) in a two-step reaction: alanine is first activated by ATP to form Ala-AMP and then transferred to the acceptor end of tRNA(Ala). Also edits incorrectly charged Ser-tRNA(Ala) and Gly-tRNA(Ala) via its editing domain. The protein is Alanine--tRNA ligase of Vibrio vulnificus (strain YJ016).